A 336-amino-acid polypeptide reads, in one-letter code: MNNNTTCIQPSMISSMALPIIYILLCIVGVFGNTLSQWIFLTKIGKKTSTHIYLSHLVTANLLVCSAMPFMSIYFLKGFQWEYQSAQCRVVNFLGTLSMHASMFVSLLILSWIAISRYATLMQKDSSQETTSCYEKIFYGHLLKKFRQPNFARKLCIYIWGVVLGIIIPVTVYYSVIEATEGEESLCYNRQMELGAMISQIAGLIGTTFIGFSFLVVLTSYYSFVSHLRKIRTCTSIMEKDLTYSSVKRHLLVIQILLIVCFLPYSIFKPIFYVLHQRDNCQQLNYLIETKNILTCLASARSSTDPIIFLLLDKTFKKTLYNLFTKSNSAHMQSYG.

The Extracellular segment spans residues 1-11 (MNNNTTCIQPS). Residues Asn-3 and Asn-4 are each glycosylated (N-linked (GlcNAc...) asparagine). The chain crosses the membrane as a helical span at residues 12–32 (MISSMALPIIYILLCIVGVFG). At 33–55 (NTLSQWIFLTKIGKKTSTHIYLS) the chain is on the cytoplasmic side. Residues 56–76 (HLVTANLLVCSAMPFMSIYFL) form a helical membrane-spanning segment. At 77–92 (KGFQWEYQSAQCRVVN) the chain is on the extracellular side. The helical transmembrane segment at 93-115 (FLGTLSMHASMFVSLLILSWIAI) threads the bilayer. Over 116-156 (SRYATLMQKDSSQETTSCYEKIFYGHLLKKFRQPNFARKLC) the chain is Cytoplasmic. A helical transmembrane segment spans residues 157–177 (IYIWGVVLGIIIPVTVYYSVI). Residues 178–197 (EATEGEESLCYNRQMELGAM) lie on the Extracellular side of the membrane. The helical transmembrane segment at 198-218 (ISQIAGLIGTTFIGFSFLVVL) threads the bilayer. Topologically, residues 219–251 (TSYYSFVSHLRKIRTCTSIMEKDLTYSSVKRHL) are cytoplasmic. Residues 252 to 272 (LVIQILLIVCFLPYSIFKPIF) form a helical membrane-spanning segment. The Extracellular segment spans residues 273–336 (YVLHQRDNCQ…SNSAHMQSYG (64 aa)).

This sequence belongs to the G-protein coupled receptor 1 family.

It localises to the cell membrane. Orphan receptor. This is Probable G-protein coupled receptor 82 (GPR82) from Homo sapiens (Human).